A 349-amino-acid chain; its full sequence is Decapping nuclease RAI1 (349 aa).

An a divalent metal cation-binding site is contributed by glutamate 157. Position 205 (glutamate 205) interacts with substrate. Aspartate 207, glutamate 222, and leucine 223 together coordinate a divalent metal cation. Substrate is bound by residues lysine 224 and glutamine 248.

The protein belongs to the DXO/Dom3Z family. Interacts with RAT1; the interaction is direct, stabilizes RAT1 protein structure and stimulates its exoribonuclease activity. The interaction also stimulates RAI1 pyrophosphohydrolase activity, probably by recruiting it to mRNA substrates. A divalent metal cation is required as a cofactor.

The protein localises to the nucleus. It catalyses the reaction a 5'-end NAD(+)-phospho-ribonucleoside in mRNA + H2O = a 5'-end phospho-ribonucleoside in mRNA + NAD(+) + H(+). It carries out the reaction a 5'-end (N(7)-methyl 5'-triphosphoguanosine)-ribonucleoside-ribonucleotide in mRNA + H2O = a (N(7)-methyl 5'-triphosphoguanosine)-nucleoside + a 5'-end phospho-ribonucleoside in mRNA + H(+). The enzyme catalyses a 5'-end triphospho-ribonucleoside in mRNA + H2O = a 5'-end phospho-ribonucleoside in mRNA + diphosphate + H(+). Functionally, decapping enzyme for NAD-capped RNAs: specifically hydrolyzes the nicotinamide adenine dinucleotide (NAD) cap from a subset of RNAs by removing the entire NAD moiety from the 5'-end of an NAD-capped RNA. The NAD-cap is present at the 5'-end of some RNAs and snoRNAs. In contrast to the canonical 5'-end N7 methylguanosine (m7G) cap, the NAD cap promotes mRNA decay. Also acts as a non-canonical decapping enzyme that removes the entire cap structure of m7G capped or incompletely capped RNAs. Has decapping activity toward incomplete 5'-end m7G cap mRNAs such as unmethylated 5'-end-capped RNA (cap0), while it has no activity toward 2'-O-ribose methylated m7G cap (cap1). Also possesses RNA 5'-pyrophosphohydrolase activity by hydrolyzing the 5'-end triphosphate to release pyrophosphates. Stimulates exoribonuclease activity of Rat1, allowing it to degrade RNAs with stable secondary structure more effectively. The polypeptide is Decapping nuclease RAI1 (RAI1) (Yarrowia lipolytica (strain CLIB 122 / E 150) (Yeast)).